The chain runs to 570 residues: Urease subunit alpha (570 aa).

The Urease domain occupies 131–570 (GGFDSHIHFI…LPMAQRYFMY (440 aa)). The Ni(2+) site is built by histidine 136, histidine 138, and lysine 219. An N6-carboxylysine modification is found at lysine 219. Histidine 221 is a binding site for substrate. Positions 248 and 274 each coordinate Ni(2+). Histidine 322 serves as the catalytic Proton donor. Aspartate 362 provides a ligand contact to Ni(2+).

It belongs to the metallo-dependent hydrolases superfamily. Urease alpha subunit family. As to quaternary structure, heterotrimer of UreA (gamma), UreB (beta) and UreC (alpha) subunits. Three heterotrimers associate to form the active enzyme. It depends on Ni cation as a cofactor. In terms of processing, carboxylation allows a single lysine to coordinate two nickel ions.

It localises to the cytoplasm. It carries out the reaction urea + 2 H2O + H(+) = hydrogencarbonate + 2 NH4(+). The protein operates within nitrogen metabolism; urea degradation; CO(2) and NH(3) from urea (urease route): step 1/1. In Rhodopseudomonas palustris (strain BisB18), this protein is Urease subunit alpha.